A 394-amino-acid polypeptide reads, in one-letter code: tRNA-specific 2-thiouridylase MnmA (394 aa).

ATP is bound by residues 30 to 37 (AMSGGVDS) and Leu-56. The active-site Nucleophile is Cys-124. A disulfide bridge connects residues Cys-124 and Cys-220. Residue Gly-148 coordinates ATP. Residues 170 to 172 (RDQ) are interaction with tRNA. The Cysteine persulfide intermediate role is filled by Cys-220.

It belongs to the MnmA/TRMU family.

The protein resides in the cytoplasm. The enzyme catalyses S-sulfanyl-L-cysteinyl-[protein] + uridine(34) in tRNA + AH2 + ATP = 2-thiouridine(34) in tRNA + L-cysteinyl-[protein] + A + AMP + diphosphate + H(+). Catalyzes the 2-thiolation of uridine at the wobble position (U34) of tRNA, leading to the formation of s(2)U34. The protein is tRNA-specific 2-thiouridylase MnmA of Hyphomonas neptunium (strain ATCC 15444).